We begin with the raw amino-acid sequence, 372 residues long: MKKGFSLPLWVTGAAKSAIKKLIGLPFEDYELIKIPKEKNLIKIKVHSAGLINEESQALGISFVDSGLDLDLTQNLEIWTIASLEKTYKTSNRPLDRINIIPGYGVGIDQKTSKICISDFAQKLLVENLLNIIPEGYTLNLEIVFPNGKFLAERTSNKSFGIVEGLSIIGTSAETFASASPDQLQNAKAQLKQIIANKVCDTIIFVIGENGLNLATSSNIKFPIIKVGNWIGPLLVDAAIQKIKTVILFGYHGKLIKLAGGIFHTHNHLADARIEILVYLAVKEEVPLEIIQKLSQSNTVEDALLVLESFSLSMADKLWNKLSDTIEKRSTEYINRYTKTDMKVGAIIFDRNRKIRWSGNNSKDYISAFKGF.

This sequence belongs to the CbiD family.

It carries out the reaction Co-precorrin-5B + S-adenosyl-L-methionine = Co-precorrin-6A + S-adenosyl-L-homocysteine. It functions in the pathway cofactor biosynthesis; adenosylcobalamin biosynthesis; cob(II)yrinate a,c-diamide from sirohydrochlorin (anaerobic route): step 6/10. In terms of biological role, catalyzes the methylation of C-1 in cobalt-precorrin-5B to form cobalt-precorrin-6A. This Prochlorococcus marinus subsp. pastoris (strain CCMP1986 / NIES-2087 / MED4) protein is Cobalt-precorrin-5B C(1)-methyltransferase.